We begin with the raw amino-acid sequence, 193 residues long: Potassium-transporting ATPase KdpC subunit (193 aa).

A helical membrane pass occupies residues 14 to 34; sequence ITFTFLVLCGLVYPLIVTGIA.

It belongs to the KdpC family. As to quaternary structure, the system is composed of three essential subunits: KdpA, KdpB and KdpC.

It is found in the cell membrane. Part of the high-affinity ATP-driven potassium transport (or Kdp) system, which catalyzes the hydrolysis of ATP coupled with the electrogenic transport of potassium into the cytoplasm. This subunit acts as a catalytic chaperone that increases the ATP-binding affinity of the ATP-hydrolyzing subunit KdpB by the formation of a transient KdpB/KdpC/ATP ternary complex. The chain is Potassium-transporting ATPase KdpC subunit from Bacillus cereus (strain ATCC 10987 / NRS 248).